Consider the following 152-residue polypeptide: UPF0266 membrane protein YobD (152 aa).

3 helical membrane passes run 6-26 (LVLI…QFIM), 45-65 (IDSV…VTNH), and 67-87 (ALIT…IFWI).

The protein belongs to the UPF0266 family.

The protein localises to the cell inner membrane. The chain is UPF0266 membrane protein YobD from Shigella dysenteriae serotype 1 (strain Sd197).